Here is a 745-residue protein sequence, read N- to C-terminus: Probable copper-transporting ATPase PacS (745 aa).

The Cytoplasmic portion of the chain corresponds to 1 to 94 (MAQTINLQLE…PVFSAKLVTG (94 aa)). Positions 3–68 (QTINLQLEGM…AVERAGYHAR (66 aa)) constitute an HMA domain. A metal cation is bound by residues C14 and C17. The chain crosses the membrane as a helical span at residues 95-115 (LVISAVLFFGSLPMMLGVNIP). Topologically, residues 116–125 (HFPHIFHDPW) are extracellular. A helical membrane pass occupies residues 126 to 145 (LQWLLATPVQFWSGAEFYRG). Topologically, residues 146-152 (AWKSVRT) are cytoplasmic. The chain crosses the membrane as a helical span at residues 153–173 (RSATMDTLVALGTSAAYFYSV). Topologically, residues 174–193 (AITLFPQWLTSQGLAAHVYF) are extracellular. The chain crosses the membrane as a helical span at residues 194 to 214 (EAAAVVITLILLGRSLEQRAR). Residues 215–342 (RETSAAIRKL…KAPIQHFVDR (128 aa)) are Cytoplasmic-facing. Residues 343 to 365 (ITHWFVPTVIVVAIAAFCIWWLT) traverse the membrane as a helical segment. The Extracellular portion of the chain corresponds to 366 to 372 (TGNITLA). The helical transmembrane segment at 373–390 (VLTLVEVLIIACPCALGL) threads the bilayer. The Cytoplasmic segment spans residues 391 to 543 (ATPTSVMVGT…QAQQWEKEQK (153 aa)). D428 acts as the 4-aspartylphosphate intermediate in catalysis. The helical transmembrane segment at 544–564 (TVIWLAVDTEVKALLAIADAI) threads the bilayer. Residues 565–687 (KPSSPQVVQA…KLSRATMGNI (123 aa)) lie on the Extracellular side of the membrane. Mg(2+)-binding residues include D633 and D637. The chain crosses the membrane as a helical span at residues 688–707 (RQNLFFAFIYNVIGIPVAAG). Topologically, residues 708 to 719 (LFYPLFGLLLNP) are cytoplasmic. The chain crosses the membrane as a helical span at residues 720 to 738 (ILAGAAMAFSSVSVVTNAL). Residues 739-745 (RLKKFCP) lie on the Extracellular side of the membrane.

This sequence belongs to the cation transport ATPase (P-type) (TC 3.A.3) family. Type IB subfamily.

It localises to the cell membrane. It catalyses the reaction Cu(+)(in) + ATP + H2O = Cu(+)(out) + ADP + phosphate + H(+). In terms of biological role, may play a role in the osmotic adaptation. This is Probable copper-transporting ATPase PacS (pacS) from Synechocystis sp. (strain ATCC 27184 / PCC 6803 / Kazusa).